The primary structure comprises 289 residues: Ketose 3-epimerase (289 aa).

Glutamate 146 (proton donor/acceptor) is an active-site residue. Glutamate 146 is a binding site for Mn(2+). Substrate contacts are provided by residues glutamate 152 and 179–182; that span reads DTYH. Aspartate 179 and histidine 205 together coordinate Mn(2+). Arginine 211 is a binding site for substrate. The active-site Proton donor/acceptor is glutamate 240. Glutamate 240 is a binding site for Mn(2+).

Belongs to the hyi family. In terms of assembly, homotetramer. Mg(2+) serves as cofactor. It depends on Mn(2+) as a cofactor. Requires Co(2+) as cofactor.

The enzyme catalyses L-ribulose = L-xylulose. It carries out the reaction D-allulose = keto-D-fructose. The catalysed reaction is keto-L-tagatose = keto-L-sorbose. It catalyses the reaction D-ribulose = D-xylulose. The enzyme catalyses L-allulose = keto-L-fructose. It carries out the reaction keto-D-tagatose = keto-D-sorbose. Functionally, catalyzes the reversible C-3 epimerization of several ketoses. Shows the highest enzymatic activity for the epimerization of L-ribulose to L-xylulose. Is also able to convert D-allulose (also known as D-psicose) to D-fructose and, to a lesser extent, L-tagatose to L-sorbose, D-ribulose to D-xylulose, L-allulose to L-fructose and D-tagatose to D-sorbose. The chain is Ketose 3-epimerase from Arthrobacter globiformis.